Consider the following 118-residue polypeptide: Holo-[acyl-carrier-protein] synthase (118 aa).

Asp8 and Glu60 together coordinate Mg(2+).

Belongs to the P-Pant transferase superfamily. AcpS family. It depends on Mg(2+) as a cofactor.

The protein localises to the cytoplasm. It carries out the reaction apo-[ACP] + CoA = holo-[ACP] + adenosine 3',5'-bisphosphate + H(+). In terms of biological role, transfers the 4'-phosphopantetheine moiety from coenzyme A to a Ser of acyl-carrier-protein. The sequence is that of Holo-[acyl-carrier-protein] synthase from Wolbachia sp. subsp. Drosophila simulans (strain wRi).